Consider the following 468-residue polypeptide: Zinc-regulated transporter 1 (468 aa).

The first 17 residues, 1–17 (MKFTHLFFIGLLTKVYT), serve as a signal peptide directing secretion. Residues 18 to 185 (ETVTVLSTRS…VKRDYDIPLR (168 aa)) are Extracellular-facing. Residues asparagine 57 and asparagine 67 are each glycosylated (N-linked (GlcNAc...) asparagine). The chain crosses the membrane as a helical span at residues 186-206 (IGLLFVILVTSGIGSFGPIVL). The Cytoplasmic portion of the chain corresponds to 207–217 (KQFVNLSQENY). A helical membrane pass occupies residues 218–238 (IIVIIKQFGTGIIISTAFVHL). The Extracellular segment spans residues 239–257 (MTHAQLMWSNSCLKIKYEG). Residues 258 to 278 (TGASITMAGIFIAFIIEYIAL) form a helical membrane-spanning segment. The Cytoplasmic segment spans residues 279 to 314 (RIVNARDTGKVDKKEIEETSSNEQSLHGISVNDKIS). A helical membrane pass occupies residues 315–335 (VMILEAGIIFHSILIGITLVV). Topologically, residues 336–338 (TDD) are extracellular. The helical transmembrane segment at 339–359 (VYFITLFIVIVFHQFFEGLAL) threads the bilayer. Residues 360–374 (SSRIISITNASLSTK) lie on the Cytoplasmic side of the membrane. The chain crosses the membrane as a helical span at residues 375 to 395 (LVMALMFALITPIGMAIGIGV). Residues 396-406 (LNKFNGNDPST) lie on the Extracellular side of the membrane. A helical transmembrane segment spans residues 407-427 (LIALGTLDSFSAGVLLWTGLI). Residues 428 to 447 (EMWSHDWLHGHLRNSSFVKT) lie on the Cytoplasmic side of the membrane. Residues 448 to 468 (TVALVSLILGMLLMSLLGNWA) traverse the membrane as a helical segment.

This sequence belongs to the ZIP transporter (TC 2.A.5) family.

It is found in the cell membrane. The enzyme catalyses Zn(2+)(in) = Zn(2+)(out). In terms of biological role, zinc transporter that acts with PRA1 in sequestration of zinc from host tissues during infection. The pH-regulated antigen 1 (PRA1) binds zinc from its environment and then reassociates with ZRT1 to acquire this essential metal. This Candida albicans (strain SC5314 / ATCC MYA-2876) (Yeast) protein is Zinc-regulated transporter 1 (ZRT101).